The primary structure comprises 231 residues: 7-cyano-7-deazaguanine synthase (231 aa).

Position 17-27 (17-27 (FSGGMDSFTLL)) interacts with ATP. Zn(2+)-binding residues include Cys193, Cys201, Cys204, and Cys207.

Belongs to the QueC family. The cofactor is Zn(2+).

It carries out the reaction 7-carboxy-7-deazaguanine + NH4(+) + ATP = 7-cyano-7-deazaguanine + ADP + phosphate + H2O + H(+). It participates in purine metabolism; 7-cyano-7-deazaguanine biosynthesis. Its function is as follows. Catalyzes the ATP-dependent conversion of 7-carboxy-7-deazaguanine (CDG) to 7-cyano-7-deazaguanine (preQ(0)). The chain is 7-cyano-7-deazaguanine synthase from Hahella chejuensis (strain KCTC 2396).